The following is a 227-amino-acid chain: Eukaryotic translation initiation factor NCBP (227 aa).

Positions 1 to 22 (MEPAAEKREAEQEELQQQHDEP) are enriched in basic and acidic residues. Residues 1–43 (MEPAAEKREAEQEELQQQHDEPAVPSADDDEAEAEENERRNRE) form a disordered region. Positions 27–36 (ADDDEAEAEE) are enriched in acidic residues.

The protein belongs to the eukaryotic initiation factor 4E family. As to quaternary structure, EIF4F is a multi-subunit complex, the composition of which varies with external and internal environmental conditions. It is composed of at least EIF4A, EIF4E and EIF4G. EIF4E is also known to interact with other partners. In higher plants two isoforms of EIF4F have been identified, named isoform EIF4F and isoform EIF(iso)4F. Isoform EIF4F has subunits p220 and p26, whereas isoform EIF(iso)4F has subunits p82 and p28.

Recognizes and binds the 7-methylguanosine-containing mRNA cap during an early step in the initiation of protein synthesis and facilitates ribosome binding by inducing the unwinding of the mRNAs secondary structures. This Oryza sativa subsp. japonica (Rice) protein is Eukaryotic translation initiation factor NCBP (NCBP).